We begin with the raw amino-acid sequence, 283 residues long: Glutamate racemase (283 aa).

Residues 28–29 (DS) and 60–61 (YG) each bind substrate. C92 functions as the Proton donor/acceptor in the catalytic mechanism. A substrate-binding site is contributed by 93–94 (NT). Residue C204 is the Proton donor/acceptor of the active site. 205-206 (TH) contacts substrate.

This sequence belongs to the aspartate/glutamate racemases family.

It carries out the reaction L-glutamate = D-glutamate. The protein operates within cell wall biogenesis; peptidoglycan biosynthesis. Provides the (R)-glutamate required for cell wall biosynthesis. The polypeptide is Glutamate racemase (Klebsiella pneumoniae (strain 342)).